A 430-amino-acid chain; its full sequence is KIN17-like protein (430 aa).

Residues 28–50 form a C2H2-type zinc finger; sequence CQMCQKQCRDENGFKCHCMSESH. A winged helix-turn-helix (wHTH) region spans residues 51–160; sequence QRQMQVFGQA…KARLKRKRIK (110 aa). The stretch at 147-183 forms a coiled coil; sequence EQAVKARLKRKRIKSDLAEDERQERMIARQIERAQQS. The Nuclear localization signal (NLS) signature appears at 155 to 158; the sequence is KRKR. Disordered stretches follow at residues 179 to 230 and 261 to 284; these read RAQQ…ANKA and EEEDEVSARDKEKEELAKKKGKDA. Over residues 209–224 the composition is skewed to acidic residues; sequence EYSDSENDHEGQEEDA. Residues 261–278 show a composition bias toward basic and acidic residues; the sequence is EEEDEVSARDKEKEELAK. A coiled-coil region spans residues 283 to 312; it reads DAINAAEARRSALDELMKEEEKAKERSNRK. The C-terminal subdomain A stretch occupies residues 319 to 370; sequence GIVVKVMSKSLAEKGYCKQKGVVKRVIDKYVGEIEMLESKHVLRVDQDELET. Positions 376-427 are C-terminal subdomain B; sequence GGLVRIVNGAYRGSNARLLSVDTERFCAKVQVEKGLYDGKVLKAIEYEDICK.

It belongs to the KIN17 family.

It is found in the nucleus. In Oryza sativa subsp. indica (Rice), this protein is KIN17-like protein.